The following is a 546-amino-acid chain: Chaperonin GroEL (546 aa).

ATP-binding positions include 29–32 (TLGP), 86–90 (DGTTT), Gly413, 476–478 (NAA), and Asp492. The disordered stretch occupies residues 521–546 (RPDESGNDAGAGAQGMDPSMMGGGMM).

Belongs to the chaperonin (HSP60) family. As to quaternary structure, forms a cylinder of 14 subunits composed of two heptameric rings stacked back-to-back. Interacts with the co-chaperonin GroES.

Its subcellular location is the cytoplasm. The enzyme catalyses ATP + H2O + a folded polypeptide = ADP + phosphate + an unfolded polypeptide.. Functionally, together with its co-chaperonin GroES, plays an essential role in assisting protein folding. The GroEL-GroES system forms a nano-cage that allows encapsulation of the non-native substrate proteins and provides a physical environment optimized to promote and accelerate protein folding. This is Chaperonin GroEL from Tetragenococcus halophilus (Pediococcus halophilus).